We begin with the raw amino-acid sequence, 512 residues long: RCC1 domain-containing protein DDB_G0279253 (512 aa).

RCC1 repeat units lie at residues 1–56 (MKIY…MIID), 58–134 (GDLY…ACDN), 135–185 (NGNI…NNNN), 197–248 (SGGV…ALSS), 249–319 (ENDV…LLDI), 321–384 (FKNV…LLTN), 386–443 (DKLY…IQVY), and 454–512 (NNNI…FILP). Positions 66 to 77 (NDSGQLGINSNE) are enriched in polar residues. 2 disordered regions span residues 66–85 (NDSG…QQQQ) and 162–200 (STSN…SGGV). The segment covering 162 to 196 (STSNNKNNNNNNNNNNNNNNNNNNNNNNNNNNNNN) has biased composition (low complexity).

This Dictyostelium discoideum (Social amoeba) protein is RCC1 domain-containing protein DDB_G0279253.